An 89-amino-acid polypeptide reads, in one-letter code: Small ribosomal subunit protein uS15 (89 aa).

Belongs to the universal ribosomal protein uS15 family. In terms of assembly, part of the 30S ribosomal subunit. Forms a bridge to the 50S subunit in the 70S ribosome, contacting the 23S rRNA.

One of the primary rRNA binding proteins, it binds directly to 16S rRNA where it helps nucleate assembly of the platform of the 30S subunit by binding and bridging several RNA helices of the 16S rRNA. Its function is as follows. Forms an intersubunit bridge (bridge B4) with the 23S rRNA of the 50S subunit in the ribosome. The protein is Small ribosomal subunit protein uS15 of Burkholderia mallei (strain NCTC 10247).